Consider the following 380-residue polypeptide: GDSL esterase/lipase At3g26430 (380 aa).

An N-terminal signal peptide occupies residues 1 to 25 (METNLLLVKCVLLASCLIHPRACSP). Residue Ser-38 is the Nucleophile of the active site. 3 N-linked (GlcNAc...) asparagine glycosylation sites follow: Asn-97, Asn-115, and Asn-183. Catalysis depends on residues Asp-346 and His-349.

This sequence belongs to the 'GDSL' lipolytic enzyme family.

It is found in the secreted. The enzyme catalyses hexadecanoate ester + H2O = an aliphatic alcohol + hexadecanoate + H(+). It carries out the reaction a butanoate ester + H2O = an aliphatic alcohol + butanoate + H(+). Its activity is regulated as follows. Lipase activity is inhibited by phenylmethylsulfonyl fluoride (PMSF), but not neostigmine bromide (NB). Its function is as follows. Lipase that can hydrolyze p-nitrophenyl butyrate and p-nitrophenyl palmitate in vitro. Possesses low activity against p-nitrophenyl acetate. Substrate preference is p-nitrophenyl palmitate &gt; p-nitrophenyl butyrate &gt;&gt; p-nitrophenyl acetate. Lacks cholinesterase activity. The protein is GDSL esterase/lipase At3g26430 of Arabidopsis thaliana (Mouse-ear cress).